Here is a 91-residue protein sequence, read N- to C-terminus: Protein sigN139 (91 aa).

Residues Asn23 and Asn34 are each glycosylated (N-linked (GlcNAc...) asparagine). A helical transmembrane segment spans residues 46 to 68 (LLPVVAFISGTVTSITGLVAGAL).

Its subcellular location is the membrane. This chain is Protein sigN139, found in Dictyostelium discoideum (Social amoeba).